We begin with the raw amino-acid sequence, 436 residues long: Peptidase B (436 aa).

The Mn(2+) site is built by K201 and D206. Residue K213 is part of the active site. 3 residues coordinate Mn(2+): D224, D283, and E285. R287 is a catalytic residue.

It belongs to the peptidase M17 family. As to quaternary structure, homohexamer. Mn(2+) is required as a cofactor.

It localises to the cytoplasm. The catalysed reaction is Release of an N-terminal amino acid, Xaa, from a peptide or arylamide. Xaa is preferably Glu or Asp but may be other amino acids, including Leu, Met, His, Cys and Gln.. Functionally, probably plays an important role in intracellular peptide degradation. This chain is Peptidase B, found in Pectobacterium atrosepticum (strain SCRI 1043 / ATCC BAA-672) (Erwinia carotovora subsp. atroseptica).